A 141-amino-acid polypeptide reads, in one-letter code: Large ribosomal subunit protein uL11 (141 aa).

It belongs to the universal ribosomal protein uL11 family. As to quaternary structure, part of the ribosomal stalk of the 50S ribosomal subunit. Interacts with L10 and the large rRNA to form the base of the stalk. L10 forms an elongated spine to which L12 dimers bind in a sequential fashion forming a multimeric L10(L12)X complex. In terms of processing, one or more lysine residues are methylated.

Functionally, forms part of the ribosomal stalk which helps the ribosome interact with GTP-bound translation factors. In Chloroherpeton thalassium (strain ATCC 35110 / GB-78), this protein is Large ribosomal subunit protein uL11.